Consider the following 311-residue polypeptide: Ribosomal RNA small subunit methyltransferase H (311 aa).

Residues 34–36 (GGY), Asp-51, Phe-75, Asp-93, and Gln-100 contribute to the S-adenosyl-L-methionine site.

It belongs to the methyltransferase superfamily. RsmH family.

The protein localises to the cytoplasm. It carries out the reaction cytidine(1402) in 16S rRNA + S-adenosyl-L-methionine = N(4)-methylcytidine(1402) in 16S rRNA + S-adenosyl-L-homocysteine + H(+). Functionally, specifically methylates the N4 position of cytidine in position 1402 (C1402) of 16S rRNA. In Caulobacter vibrioides (strain ATCC 19089 / CIP 103742 / CB 15) (Caulobacter crescentus), this protein is Ribosomal RNA small subunit methyltransferase H.